We begin with the raw amino-acid sequence, 460 residues long: Bifunctional protein GlmU (460 aa).

The tract at residues 1–229 (MSHYAIILAA…FEESLGVNDR (229 aa)) is pyrophosphorylase. UDP-N-acetyl-alpha-D-glucosamine-binding positions include 8 to 11 (LAAG), lysine 22, glutamine 72, and 77 to 78 (GT). Aspartate 102 provides a ligand contact to Mg(2+). Residues glycine 139, glutamate 154, asparagine 169, and asparagine 227 each coordinate UDP-N-acetyl-alpha-D-glucosamine. Asparagine 227 contacts Mg(2+). Residues 230 to 250 (VALATAEDVMRRRINKAHMIN) are linker. The segment at 251 to 460 (GVTFQNPNAT…KKPHHPSQQK (210 aa)) is N-acetyltransferase. Positions 332 and 350 each coordinate UDP-N-acetyl-alpha-D-glucosamine. Histidine 362 (proton acceptor) is an active-site residue. UDP-N-acetyl-alpha-D-glucosamine contacts are provided by tyrosine 365 and asparagine 376. Residues alanine 379, 385–386 (NY), serine 404, alanine 422, and arginine 439 each bind acetyl-CoA.

The protein in the N-terminal section; belongs to the N-acetylglucosamine-1-phosphate uridyltransferase family. This sequence in the C-terminal section; belongs to the transferase hexapeptide repeat family. Homotrimer. It depends on Mg(2+) as a cofactor.

It localises to the cytoplasm. It catalyses the reaction alpha-D-glucosamine 1-phosphate + acetyl-CoA = N-acetyl-alpha-D-glucosamine 1-phosphate + CoA + H(+). The catalysed reaction is N-acetyl-alpha-D-glucosamine 1-phosphate + UTP + H(+) = UDP-N-acetyl-alpha-D-glucosamine + diphosphate. Its pathway is nucleotide-sugar biosynthesis; UDP-N-acetyl-alpha-D-glucosamine biosynthesis; N-acetyl-alpha-D-glucosamine 1-phosphate from alpha-D-glucosamine 6-phosphate (route II): step 2/2. It functions in the pathway nucleotide-sugar biosynthesis; UDP-N-acetyl-alpha-D-glucosamine biosynthesis; UDP-N-acetyl-alpha-D-glucosamine from N-acetyl-alpha-D-glucosamine 1-phosphate: step 1/1. The protein operates within bacterial outer membrane biogenesis; LPS lipid A biosynthesis. Catalyzes the last two sequential reactions in the de novo biosynthetic pathway for UDP-N-acetylglucosamine (UDP-GlcNAc). The C-terminal domain catalyzes the transfer of acetyl group from acetyl coenzyme A to glucosamine-1-phosphate (GlcN-1-P) to produce N-acetylglucosamine-1-phosphate (GlcNAc-1-P), which is converted into UDP-GlcNAc by the transfer of uridine 5-monophosphate (from uridine 5-triphosphate), a reaction catalyzed by the N-terminal domain. In Streptococcus thermophilus (strain CNRZ 1066), this protein is Bifunctional protein GlmU.